The following is a 271-amino-acid chain: Thiazole synthase (271 aa).

Lys-95 (schiff-base intermediate with DXP) is an active-site residue. 1-deoxy-D-xylulose 5-phosphate contacts are provided by residues Gly-156, 182–183, and 204–205; these read AG and NT.

It belongs to the ThiG family. As to quaternary structure, homotetramer. Forms heterodimers with either ThiH or ThiS.

It localises to the cytoplasm. The enzyme catalyses [ThiS sulfur-carrier protein]-C-terminal-Gly-aminoethanethioate + 2-iminoacetate + 1-deoxy-D-xylulose 5-phosphate = [ThiS sulfur-carrier protein]-C-terminal Gly-Gly + 2-[(2R,5Z)-2-carboxy-4-methylthiazol-5(2H)-ylidene]ethyl phosphate + 2 H2O + H(+). It functions in the pathway cofactor biosynthesis; thiamine diphosphate biosynthesis. Its function is as follows. Catalyzes the rearrangement of 1-deoxy-D-xylulose 5-phosphate (DXP) to produce the thiazole phosphate moiety of thiamine. Sulfur is provided by the thiocarboxylate moiety of the carrier protein ThiS. In vitro, sulfur can be provided by H(2)S. This is Thiazole synthase from Yersinia pseudotuberculosis serotype O:3 (strain YPIII).